Reading from the N-terminus, the 126-residue chain is MKAFLFAVLAAVLCVERAHTLICFSCSDASSNWACLTPVKCAENEEHCVTTYVGVGIGGKSGQSISKGCSPVCPSAGINLGIAAASVYCCDSFLCNISGSSSVKASYAVLALGILVSFVYVLRARE.

The N-terminal stretch at 1 to 20 is a signal peptide; the sequence is MKAFLFAVLAAVLCVERAHT. The 78-residue stretch at 21 to 98 folds into the UPAR/Ly6 domain; the sequence is LICFSCSDAS…CCDSFLCNIS (78 aa). 5 disulfide bridges follow: Cys-23–Cys-48, Cys-26–Cys-35, Cys-41–Cys-69, Cys-73–Cys-89, and Cys-90–Cys-95. N-linked (GlcNAc...) asparagine glycosylation occurs at Asn-96. Residue Ser-98 is the site of GPI-anchor amidated serine attachment. The propeptide at 99–126 is removed in mature form; the sequence is GSSSVKASYAVLALGILVSFVYVLRARE.

Expressed by thymic blast cells.

The protein localises to the cell membrane. This chain is Lymphocyte antigen 6E (LY6E), found in Gallus gallus (Chicken).